The following is a 153-amino-acid chain: Ribosome maturation factor RimP (153 aa).

The protein belongs to the RimP family.

Its subcellular location is the cytoplasm. In terms of biological role, required for maturation of 30S ribosomal subunits. In Psychromonas ingrahamii (strain DSM 17664 / CCUG 51855 / 37), this protein is Ribosome maturation factor RimP.